Here is a 334-residue protein sequence, read N- to C-terminus: Testis-specific Y-encoded protein 1 (334 aa).

Residue serine 4 is modified to Phosphoserine. 2 disordered regions span residues 27–46 (LEGEPSVQAPEQSPGAPAGD) and 96–146 (NEGE…AERR). 2 stretches are compositionally biased toward basic and acidic residues: residues 96–108 (NEGEEVKDQKQEG) and 115–128 (ELEKNPEQACDSKD).

This sequence belongs to the nucleosome assembly protein (NAP) family. In terms of processing, phosphorylated. In terms of tissue distribution, testis.

It localises to the cytoplasm. It is found in the nucleus. May be involved in sperm differentiation and proliferation. The chain is Testis-specific Y-encoded protein 1 (Tspy1) from Rattus norvegicus (Rat).